Consider the following 518-residue polypeptide: Probable glycosyltransferase At5g03795 (518 aa).

The Cytoplasmic portion of the chain corresponds to 1-25 (MGDEDVDGKCKNMSACSSTTSYSTK). The helical; Signal-anchor for type II membrane protein transmembrane segment at 26–46 (LFLFMVPLVVISGFVFVNIGP) threads the bilayer. The Lumenal segment spans residues 47–518 (KDSTSLLTSL…RRLNVKIREV (472 aa)). Residues asparagine 104, asparagine 113, asparagine 120, asparagine 282, and asparagine 320 are each glycosylated (N-linked (GlcNAc...) asparagine).

The protein belongs to the glycosyltransferase 47 family.

It localises to the golgi apparatus membrane. Its function is as follows. May be involved in cell wall biosynthesis. This is Probable glycosyltransferase At5g03795 from Arabidopsis thaliana (Mouse-ear cress).